The chain runs to 92 residues: YcgL domain-containing protein ASA_2166 (92 aa).

A YcgL domain is found at 1-85 (MLCAVYKSRK…PPENLLEQHK (85 aa)).

This chain is YcgL domain-containing protein ASA_2166, found in Aeromonas salmonicida (strain A449).